The following is a 94-amino-acid chain: Large ribosomal subunit protein bL27 (94 aa).

A propeptide spanning residues 1-9 is cleaved from the precursor; that stretch reads MLKLNLQFF.

Belongs to the bacterial ribosomal protein bL27 family. The N-terminus is cleaved by ribosomal processing cysteine protease Prp.

This chain is Large ribosomal subunit protein bL27, found in Staphylococcus aureus (strain Mu3 / ATCC 700698).